The primary structure comprises 432 residues: Tryptophan--tRNA ligase (432 aa).

ATP-binding positions include 13-15 (TTS) and 21-22 (GN). The 'HIGH' region signature appears at 14 to 22 (TSGTPHLGN). Residue Asp146 coordinates L-tryptophan. ATP-binding positions include 158–160 (GRD), Leu198, and 205–209 (KMSKS). Residues 205–209 (KMSKS) carry the 'KMSKS' region motif.

It belongs to the class-I aminoacyl-tRNA synthetase family. As to quaternary structure, homodimer.

It localises to the cytoplasm. The enzyme catalyses tRNA(Trp) + L-tryptophan + ATP = L-tryptophyl-tRNA(Trp) + AMP + diphosphate + H(+). Its function is as follows. Catalyzes the attachment of tryptophan to tRNA(Trp). The sequence is that of Tryptophan--tRNA ligase from Xanthomonas axonopodis pv. citri (strain 306).